The following is a 421-amino-acid chain: Histidine--tRNA ligase (421 aa).

This sequence belongs to the class-II aminoacyl-tRNA synthetase family. Homodimer.

Its subcellular location is the cytoplasm. The enzyme catalyses tRNA(His) + L-histidine + ATP = L-histidyl-tRNA(His) + AMP + diphosphate + H(+). This chain is Histidine--tRNA ligase, found in Francisella tularensis subsp. mediasiatica (strain FSC147).